The sequence spans 40 residues: Dolichyl-diphosphooligosaccharide--protein glycosyltransferase subunit 4 (40 aa).

At 1–4 the chain is on the lumenal side; sequence MITD. The helical transmembrane segment at 5–25 threads the bilayer; that stretch reads VQLAIFSNVLGVFLFLLVVAY. Topologically, residues 26 to 40 are cytoplasmic; the sequence is HYINANTGKSIIKSK.

This sequence belongs to the OST4 family. As to quaternary structure, component of the oligosaccharyltransferase (OST) complex.

It localises to the endoplasmic reticulum membrane. Subunit of the oligosaccharyl transferase (OST) complex that catalyzes the initial transfer of a defined glycan (Glc(3)Man(9)GlcNAc(2) in eukaryotes) from the lipid carrier dolichol-pyrophosphate to an asparagine residue within an Asn-X-Ser/Thr consensus motif in nascent polypeptide chains, the first step in protein N-glycosylation. N-glycosylation occurs cotranslationally and the complex associates with the Sec61 complex at the channel-forming translocon complex that mediates protein translocation across the endoplasmic reticulum (ER). All subunits are required for a maximal enzyme activity. This is Dolichyl-diphosphooligosaccharide--protein glycosyltransferase subunit 4 from Drosophila grimshawi (Hawaiian fruit fly).